The primary structure comprises 100 residues: MARKSLIQREKKRKKLEQKYHLIRRSSKKEISKVPSLSDKWEIHGKLQSPPRNSAPTRLHRRCFSTGRPRANYRDFGLSGHILREMVHACLLPGATRSSW.

It belongs to the universal ribosomal protein uS14 family. In terms of assembly, part of the 30S ribosomal subunit.

It localises to the plastid. The protein resides in the chloroplast. Binds 16S rRNA, required for the assembly of 30S particles. This chain is Small ribosomal subunit protein uS14c, found in Buxus microphylla (Littleleaf boxwood).